Reading from the N-terminus, the 134-residue chain is MPTIQQLVRKGRESFADKSKSPALNSCPQRRGVCVRVYTTTPRKPNSAMRKVARVRLTNSKEVNAYIPGEGHNLQEHSIVLVRGGRVKDLPGVRYHIVRGTLDTAGVNGRTQRRSKYGAKRPKPGQAPAAKGKK.

Residues 1 to 27 (MPTIQQLVRKGRESFADKSKSPALNSC) form a disordered region. A compositionally biased stretch (basic and acidic residues) spans 10–20 (KGRESFADKSK). At aspartate 89 the chain carries 3-methylthioaspartic acid. Residues 103 to 134 (DTAGVNGRTQRRSKYGAKRPKPGQAPAAKGKK) form a disordered region. Basic residues predominate over residues 111-123 (TQRRSKYGAKRPK). The segment covering 124-134 (PGQAPAAKGKK) has biased composition (low complexity).

It belongs to the universal ribosomal protein uS12 family. Part of the 30S ribosomal subunit. Contacts proteins S8 and S17. May interact with IF1 in the 30S initiation complex.

In terms of biological role, with S4 and S5 plays an important role in translational accuracy. Its function is as follows. Interacts with and stabilizes bases of the 16S rRNA that are involved in tRNA selection in the A site and with the mRNA backbone. Located at the interface of the 30S and 50S subunits, it traverses the body of the 30S subunit contacting proteins on the other side and probably holding the rRNA structure together. The combined cluster of proteins S8, S12 and S17 appears to hold together the shoulder and platform of the 30S subunit. The polypeptide is Small ribosomal subunit protein uS12 (Porphyromonas gingivalis (strain ATCC 33277 / DSM 20709 / CIP 103683 / JCM 12257 / NCTC 11834 / 2561)).